Reading from the N-terminus, the 393-residue chain is NAD(P)H-quinone oxidoreductase subunit H, chloroplastic (393 aa).

This sequence belongs to the complex I 49 kDa subunit family. NDH is composed of at least 16 different subunits, 5 of which are encoded in the nucleus.

The protein localises to the plastid. The protein resides in the chloroplast thylakoid membrane. The catalysed reaction is a plastoquinone + NADH + (n+1) H(+)(in) = a plastoquinol + NAD(+) + n H(+)(out). The enzyme catalyses a plastoquinone + NADPH + (n+1) H(+)(in) = a plastoquinol + NADP(+) + n H(+)(out). In terms of biological role, NDH shuttles electrons from NAD(P)H:plastoquinone, via FMN and iron-sulfur (Fe-S) centers, to quinones in the photosynthetic chain and possibly in a chloroplast respiratory chain. The immediate electron acceptor for the enzyme in this species is believed to be plastoquinone. Couples the redox reaction to proton translocation, and thus conserves the redox energy in a proton gradient. In Nandina domestica (Heavenly bamboo), this protein is NAD(P)H-quinone oxidoreductase subunit H, chloroplastic.